The sequence spans 346 residues: Uroporphyrinogen decarboxylase (346 aa).

Residues 21 to 25 (RQAGR), phenylalanine 40, aspartate 71, tyrosine 146, serine 201, and histidine 316 each bind substrate.

It belongs to the uroporphyrinogen decarboxylase family. As to quaternary structure, homodimer.

Its subcellular location is the cytoplasm. It catalyses the reaction uroporphyrinogen III + 4 H(+) = coproporphyrinogen III + 4 CO2. Its pathway is porphyrin-containing compound metabolism; protoporphyrin-IX biosynthesis; coproporphyrinogen-III from 5-aminolevulinate: step 4/4. Its function is as follows. Catalyzes the decarboxylation of four acetate groups of uroporphyrinogen-III to yield coproporphyrinogen-III. This chain is Uroporphyrinogen decarboxylase, found in Rickettsia conorii (strain ATCC VR-613 / Malish 7).